The chain runs to 84 residues: Cell division topological specificity factor (84 aa).

It belongs to the MinE family.

In terms of biological role, prevents the cell division inhibition by proteins MinC and MinD at internal division sites while permitting inhibition at polar sites. This ensures cell division at the proper site by restricting the formation of a division septum at the midpoint of the long axis of the cell. This is Cell division topological specificity factor from Pseudomonas aeruginosa (strain LESB58).